The sequence spans 178 residues: Large ribosomal subunit protein uL30 (178 aa).

It belongs to the universal ribosomal protein uL30 family. Part of the 50S ribosomal subunit.

The protein is Large ribosomal subunit protein uL30 of Pyrobaculum aerophilum (strain ATCC 51768 / DSM 7523 / JCM 9630 / CIP 104966 / NBRC 100827 / IM2).